Consider the following 412-residue polypeptide: Alpha-1-antiproteinase (412 aa).

The N-terminal stretch at 1–24 (MPSSISWGLLLLAGLCCLAPGSLA) is a signal peptide. Ser-33 bears the Phosphoserine mark. Residues Asn-65, Asn-102, Asn-165, and Asn-266 are each glycosylated (N-linked (GlcNAc...) asparagine). Residues 368-387 (GVTVLEAIPMSLPPDVRFDR) form an RCL region. At Ser-378 the chain carries Phosphoserine.

It belongs to the serpin family. Interacts with CELA2A. Interacts with ERGIC3 and LMAN1/ERGIC53. Interacts with PRSS1/Trypsin. As to expression, plasma.

The protein localises to the secreted. Functionally, inhibitor of serine proteases. The protein is Alpha-1-antiproteinase of Callosciurus caniceps (Gray-bellied squirrel).